Consider the following 337-residue polypeptide: Pyridoxal 5'-phosphate synthase subunit PdxS (337 aa).

Asp65 contributes to the D-ribose 5-phosphate binding site. Lys122 functions as the Schiff-base intermediate with D-ribose 5-phosphate in the catalytic mechanism. Gly194 is a binding site for D-ribose 5-phosphate. Lys206 serves as a coordination point for D-glyceraldehyde 3-phosphate. D-ribose 5-phosphate contacts are provided by residues Gly255 and 276 to 277; that span reads GS.

The protein belongs to the PdxS/SNZ family. In terms of assembly, in the presence of PdxT, forms a dodecamer of heterodimers.

The catalysed reaction is aldehydo-D-ribose 5-phosphate + D-glyceraldehyde 3-phosphate + L-glutamine = pyridoxal 5'-phosphate + L-glutamate + phosphate + 3 H2O + H(+). It participates in cofactor biosynthesis; pyridoxal 5'-phosphate biosynthesis. In terms of biological role, catalyzes the formation of pyridoxal 5'-phosphate from ribose 5-phosphate (RBP), glyceraldehyde 3-phosphate (G3P) and ammonia. The ammonia is provided by the PdxT subunit. Can also use ribulose 5-phosphate and dihydroxyacetone phosphate as substrates, resulting from enzyme-catalyzed isomerization of RBP and G3P, respectively. The polypeptide is Pyridoxal 5'-phosphate synthase subunit PdxS (Pyrobaculum arsenaticum (strain DSM 13514 / JCM 11321 / PZ6)).